The sequence spans 163 residues: Small ribosomal subunit protein uS9 (163 aa).

A disordered region spans residues 1–41; it reads MAENTNDSAVLETEEELTSYTTETNAGAGTGTSTIAPGYGT. The segment covering 18–38 has biased composition (low complexity); it reads TSYTTETNAGAGTGTSTIAPG.

Belongs to the universal ribosomal protein uS9 family.

The chain is Small ribosomal subunit protein uS9 from Bifidobacterium adolescentis (strain ATCC 15703 / DSM 20083 / NCTC 11814 / E194a).